A 674-amino-acid polypeptide reads, in one-letter code: MLAKPAAQFTLEEAQAEVEKLRKQLNQWRLEYYTKDAPTVTDNVYDDHYRDLQALEEAYPKLVTPDSPTQEVGDVINSDFAKVQHPIPMLSMGDVFSFEELSEWDARMQSNVGHPVDYNVELKIDGLALSLIYENGKLVQGSTRGDGNVGEDVTRNVLTIASVPKQLKQPLSLEVRGECYMPKAAFAKLNARQETEGGTPFANPRNAAAGSLRQLDAKVTAARELDTFIYTLIEPEQFNVTTQHEAIAFMQALGFTTNPSSEVAGDMQAIDTYIKKYTTDRDALPYGIDGIVLKVNDLALQAQLGNTVKVPRWEIAYKFPPEEAETVIHDIVWTVGRTGVVTPTAVMDPVQLAGTTVARATLHNADMIRDKDIRIGDTVMLHKAGDIIPEVSRVLVAKRPVDTPPAPIPEACPSCGQKLVHLDDEVALRCINPMCPAQVQEQLTHFASRNAMNIDGLGPKIVAQLQAKHLVKDVADLYHLTAADLAKLDKFKEKSINNLLSAINNSRQNSVERLIFGLGIRHVGGKAARILAEHFGDLDHLMTASQEAIADVPNIGPTIAEAIVTYFKAATVQKLITQLREADVNLRYTGPTKPVVKDSFVAGKTVVITGKFAEFSRPALTKQLEGLGAKVTGSVSKKTDLLIAGDAAGSKLAKAQSLNVPIMNETELLANLKD.

Residues 42–46, 91–92, and E121 each bind NAD(+); these read DNVYD and SM. Residue K123 is the N6-AMP-lysine intermediate of the active site. Positions 144, 178, 294, and 318 each coordinate NAD(+). Residues C412, C415, C430, and C435 each contribute to the Zn(2+) site. A BRCT domain is found at 596-674; sequence VKDSFVAGKT…ETELLANLKD (79 aa).

The protein belongs to the NAD-dependent DNA ligase family. LigA subfamily. Requires Mg(2+) as cofactor. The cofactor is Mn(2+).

The enzyme catalyses NAD(+) + (deoxyribonucleotide)n-3'-hydroxyl + 5'-phospho-(deoxyribonucleotide)m = (deoxyribonucleotide)n+m + AMP + beta-nicotinamide D-nucleotide.. Its function is as follows. DNA ligase that catalyzes the formation of phosphodiester linkages between 5'-phosphoryl and 3'-hydroxyl groups in double-stranded DNA using NAD as a coenzyme and as the energy source for the reaction. It is essential for DNA replication and repair of damaged DNA. This is DNA ligase from Lacticaseibacillus casei (strain BL23) (Lactobacillus casei).